The following is a 1024-amino-acid chain: SAC3 family protein 1 (1024 aa).

The segment at 1-62 (MEKRNETGNN…QDSRQKRFSS (62 aa)) is disordered. Positions 11 to 21 (RLKRSNNRGKS) are enriched in basic residues. A compositionally biased stretch (basic and acidic residues) spans 22 to 38 (KKDWKDASVETTPRETS). Residues 39–52 (VDEDNTSVFEDVEA) are compositionally biased toward acidic residues. Positions 243–433 (EVEQLRKGIL…NKTAFFNDSK (191 aa)) constitute a PCI domain. The residue at position 841 (serine 841) is a Phosphoserine. Residues 945–1022 (AQLEELEVVR…ARDLLKKVET (78 aa)) are a coiled coil.

It belongs to the SAC3 family.

It is found in the cytoplasm. Its subcellular location is the nucleus envelope. This chain is SAC3 family protein 1, found in Schizosaccharomyces pombe (strain 972 / ATCC 24843) (Fission yeast).